A 41-amino-acid polypeptide reads, in one-letter code: U-AITX-Bg1a (41 aa).

3 cysteine pairs are disulfide-bonded: Cys2/Cys35, Cys4/Cys28, and Cys18/Cys36.

It belongs to the sea anemone type 3 (BDS) potassium channel toxin family.

Its subcellular location is the secreted. It localises to the nematocyst. Functionally, potently and selectively inhibits voltage-gated potassium channels Kv11/KCNH/ERG. Acts as a gating-modifier toxin that shifts the voltage-dependence of ERG activation in the positive direction and suppresses its current amplitudes elicited by strong depolarizing pulses that maximally activate the channels. The sequence is that of U-AITX-Bg1a from Bunodosoma granuliferum (Red warty sea anemone).